Consider the following 184-residue polypeptide: NADH-quinone oxidoreductase subunit B (184 aa).

Positions 37, 38, 103, and 132 each coordinate [4Fe-4S] cluster.

The protein belongs to the complex I 20 kDa subunit family. As to quaternary structure, NDH-1 is composed of 14 different subunits. Subunits NuoB, C, D, E, F, and G constitute the peripheral sector of the complex. The cofactor is [4Fe-4S] cluster.

It localises to the cell membrane. It carries out the reaction a quinone + NADH + 5 H(+)(in) = a quinol + NAD(+) + 4 H(+)(out). NDH-1 shuttles electrons from NADH, via FMN and iron-sulfur (Fe-S) centers, to quinones in the respiratory chain. The immediate electron acceptor for the enzyme in this species is believed to be a menaquinone. Couples the redox reaction to proton translocation (for every two electrons transferred, four hydrogen ions are translocated across the cytoplasmic membrane), and thus conserves the redox energy in a proton gradient. This chain is NADH-quinone oxidoreductase subunit B, found in Mycolicibacterium paratuberculosis (strain ATCC BAA-968 / K-10) (Mycobacterium paratuberculosis).